The following is a 515-amino-acid chain: MGLHFKWPLGAPMLAAIYAMSVVLKMLPALGMACPPKCRCEKLLFYCDSQGFHSVPNATDKGSLGLSLRHNHITALERDQFASFSQLTWLHLDHNQISTVKEDAFQGLYKLKELILSSNKIFYLPNTTFTQLINLQNLDLSFNQLSSLHPELFYGLRKLQTLHLRSNSLRTIPVRLFWDCRSLEFLDLSTNRLRSLARNGFAGLIKLRELHLEHNQLTKINFAHFLRLSSLHTLFLQWNKISNLTCGMEWTWSTLEKLDLTGNEIKAIDLTVFETMPNLKILLMDNNKLNSLDSKILSSLRSLTTVGLSGNLWECSPRVCALASWLGSFQGRWEHSILCHSPDHTQGEDILDAVHGFQLCWNLSTTVTAMATTYRDPTTEYTKISSSSYHVGDKEIPTTAGIAVTTEEHFPEPDNAIFTQRVITGTMALLFSFFFIIFIVFISRKCCPPTLRRIRQCSMIQNHRQLRSQTRLHMSNMSDQGPYSEYEPTHEGPFIIINGYGQCKCQQLPYKECEV.

The signal sequence occupies residues 1 to 33 (MGLHFKWPLGAPMLAAIYAMSVVLKMLPALGMA). The Extracellular portion of the chain corresponds to 34 to 421 (CPPKCRCEKL…EPDNAIFTQR (388 aa)). Residue N57 is glycosylated (N-linked (GlcNAc...) asparagine). LRR repeat units lie at residues 61–83 (KGSL…QFAS), 84–107 (FSQL…AFQG), 109–131 (YKLK…TFTQ), 132–155 (LINL…LFYG), 156–179 (LRKL…LFWD), 181–203 (RSLE…GFAG), 205–227 (IKLR…HFLR), 229–251 (SSLH…MEWT), 252–275 (WSTL…VFET), and 276–299 (MPNL…ILSS). A glycan (N-linked (GlcNAc...) asparagine) is linked at N126. Residue N243 is glycosylated (N-linked (GlcNAc...) asparagine). N362 carries N-linked (GlcNAc...) asparagine glycosylation. Residues 422 to 442 (VITGTMALLFSFFFIIFIVFI) traverse the membrane as a helical segment. Residues 443–515 (SRKCCPPTLR…QQLPYKECEV (73 aa)) are Cytoplasmic-facing. Residues 512 to 515 (ECEV) carry the Involved in DLG4-binding motif.

Belongs to the LRRTM family. In terms of assembly, interacts with DLG4. Interacts with neurexin NRXN1; interaction is mediated by heparan sulfate glycan modification on neurexin. As to expression, expressed in neuronal tissues. Widely distributed in neuropil regions in discrete puncta throughout the brain (at protein level). Detected in cortex, thalamus, striatum, olfactory bulb, cerebellum and all hippocampal subfields (at protein level). More abundant in deep than in superficial layers of neocortex (at protein level).

Its subcellular location is the cell membrane. It localises to the postsynaptic cell membrane. Involved in the development and maintenance of excitatory synapses in the nervous system. Regulates surface expression of AMPA receptors and instructs the development of functional glutamate release sites. Acts as a ligand for the presynaptic receptors NRXN1-A and NRXN1-B. The polypeptide is Leucine-rich repeat transmembrane neuronal protein 2 (Lrrtm2) (Rattus norvegicus (Rat)).